Here is a 2624-residue protein sequence, read N- to C-terminus: Highly reducing polyketide synthase ALT1 (2624 aa).

Residues V28 to S449 enclose the Ketosynthase family 3 (KS3) domain. The For beta-ketoacyl synthase activity role is filled by C200. The interval V289 to S308 is disordered. Residues H335 and H372 each act as for beta-ketoacyl synthase activity in the active site. Over residues E523 to N544 the composition is skewed to polar residues. The disordered stretch occupies residues E523–G545. The tract at residues V639–K945 is malonyl-CoA:ACP transacylase (MAT) domain. Residues H1009–H1140 are N-terminal hotdog fold. Residues H1009 to E1301 are dehydratase (DH) domain. The region spanning H1009 to I1306 is the PKS/mFAS DH domain. H1041 functions as the Proton acceptor; for dehydratase activity in the catalytic mechanism. Residues Q1157 to I1306 are C-terminal hotdog fold. The Proton donor; for dehydratase activity role is filled by D1217. Residues L1493–L1599 form a methyltransferase (CMet) domain region. Positions G1895 to V2205 are enoyl reductase (ER) (ER) domain. The segment at T2230 to T2509 is ketoreductase (KR) domain. Positions A2522–L2600 constitute a Carrier domain. At S2559 the chain carries O-(pantetheine 4'-phosphoryl)serine.

It participates in mycotoxin biosynthesis. Functionally, highly reducing polyketide synthase; part of the gene cluster that mediates the biosynthesis of the host-selective toxins (HSTs) AAL-toxins, sphinganine-analog mycotoxins responsible for Alternaria stem canker on tomato by the tomato pathotype. The biosynthesis starts with the polyketide synthase ALT1-catalyzed C-16 carbon chain assembly from one starter acetyl-CoA unit with malonyl-CoA extender units. ALT1 also selectively transfers methyl groups at the first and the third cycle of chain elongation for AAL toxin. The C-16 polyketide chain is released from the enzyme by a nucleophilic attack of a carbanion, which is derived from R-carbon of glycin by decarboxylation, on the carbonyl carbon of polyketide acyl chain. This step is probably catalyzed by a pyridoxal 5'-phosphate-dependent aminoacyl transferase ALT4. The respective functions of the other enzymes encoded by the cluster have still to be elucidated. The sphingosine N-acyltransferase-like protein ALT7 seems not to act as a resistance/self-tolerance factor against the toxin in the toxin biosynthetic gene cluster, contrary to what is expected. This chain is Highly reducing polyketide synthase ALT1, found in Alternaria alternata (Alternaria rot fungus).